The sequence spans 169 residues: Ribosome maturation factor RimP (169 aa).

It belongs to the RimP family.

The protein localises to the cytoplasm. Its function is as follows. Required for maturation of 30S ribosomal subunits. This is Ribosome maturation factor RimP from Coprothermobacter proteolyticus (strain ATCC 35245 / DSM 5265 / OCM 4 / BT).